Consider the following 210-residue polypeptide: Uridine kinase (210 aa).

13–20 (GGSGSGKT) contributes to the ATP binding site.

This sequence belongs to the uridine kinase family.

It is found in the cytoplasm. The catalysed reaction is uridine + ATP = UMP + ADP + H(+). It carries out the reaction cytidine + ATP = CMP + ADP + H(+). Its pathway is pyrimidine metabolism; CTP biosynthesis via salvage pathway; CTP from cytidine: step 1/3. The protein operates within pyrimidine metabolism; UMP biosynthesis via salvage pathway; UMP from uridine: step 1/1. In Oceanobacillus iheyensis (strain DSM 14371 / CIP 107618 / JCM 11309 / KCTC 3954 / HTE831), this protein is Uridine kinase.